A 183-amino-acid polypeptide reads, in one-letter code: Dual-action ribosomal maturation protein DarP (183 aa).

Residues 1 to 20 (MKQKYEDWLNDVPDNQEDDE) form a disordered region.

Belongs to the DarP family.

The protein resides in the cytoplasm. In terms of biological role, member of a network of 50S ribosomal subunit biogenesis factors which assembles along the 30S-50S interface, preventing incorrect 23S rRNA structures from forming. Promotes peptidyl transferase center (PTC) maturation. The chain is Dual-action ribosomal maturation protein DarP from Pectobacterium carotovorum subsp. carotovorum (strain PC1).